Reading from the N-terminus, the 782-residue chain is General transcription and DNA repair factor IIH helicase/translocase subunit XPB (782 aa).

Residues 1 to 11 show a composition bias toward basic and acidic residues; sequence MGKRDRADRDK. Disordered regions lie at residues 1–51 and 220–240; these read MGKR…ESGT and ISKTAEGSGGPSTSRVTDPQG. The Nuclear localization signal signature appears at 6–18; sequence RADRDKKKSRKRH. Positions 21–30 are enriched in acidic residues; that stretch reads DEEDDEEDAP. The Helicase ATP-binding domain occupies 327-488; it reads MFGNGRARSG…DLNFLIGPKL (162 aa). An ATP-binding site is contributed by 340-347; that stretch reads LPCGAGKS. The short motif at 441 to 444 is the DEVH box element; sequence DEVH. One can recognise a Helicase C-terminal domain in the interval 542–702; the sequence is RACQFLIKFH…LAGMEEEDLA (161 aa). S686 is modified (phosphoserine). S751 carries the phosphoserine; by CK2 modification.

Belongs to the helicase family. RAD25/XPB subfamily. As to quaternary structure, component of the 7-subunit TFIIH core complex composed of XPB/ERCC3, XPD/ERCC2, GTF2H1, GTF2H2, GTF2H3, GTF2H4 and GTF2H5, which is active in NER. The core complex associates with the 3-subunit CDK-activating kinase (CAK) module composed of CCNH/cyclin H, CDK7 and MNAT1 to form the 10-subunit holoenzyme (holo-TFIIH) active in transcription. Interacts with PUF60. Interacts with ATF7IP. Interacts with KAT2A; leading to KAT2A recruitment to promoters and acetylation of histones. Part of TBP-based Pol II pre-initiation complex (PIC), in which Pol II core assembles with general transcription factors and other specific initiation factors including GTF2E1, GTF2E2, GTF2F1, GTF2F2, TCEA1, ERCC2, ERCC3, GTF2H2, GTF2H3, GTF2H4, GTF2H5, GTF2A1, GTF2A2, GTF2B and TBP; this large multi-subunit PIC complex mediates DNA unwinding and targets Pol II core to the transcription start site where the first phosphodiester bond forms. Post-translationally, phosphorylation on Ser-751 by CK2 controls the 5'-excision activity of ERCC1-XPF endonuclease; phosphorylated protein inhibits the excision activity and thus NER. Dephosphorylation reactivates the 5'-excision step. Phosphorylation has no effect on transcription or the 3'-5' helicase activity.

The protein resides in the nucleus. It catalyses the reaction Couples ATP hydrolysis with the unwinding of duplex DNA by translocating in the 3'-5' direction.. The catalysed reaction is ATP + H2O = ADP + phosphate + H(+). With respect to regulation, phosphorylation on Ser-751 by CK2 controls the 5'-excision activity of ERCC1-XPF endonuclease; phosphorylated protein inhibits the excision activity and thus NER. ATPase activity is stimulated by TFIIH subunit p52 (GTF2H4). DNA translocase activity by this subunit in TFIIH is stimulated by XPA, ERCC5/XPG and XFP plus ERCC1. Its function is as follows. ATP-dependent 3'-5' DNA helicase/translocase; binds dsDNA rather than ssDNA, unzipping it in a translocase rather than classical helicase activity. Component of the general transcription and DNA repair factor IIH (TFIIH) core complex. When complexed to CDK-activating kinase (CAK), involved in RNA transcription by RNA polymerase II. The ATPase activity of XPB/ERCC3, but not its helicase activity, is required for DNA opening; it may wrap around the damaged DNA wedging it open, causing localized melting and twisting that allows XPD/ERCC2 helicase to anchor. The ATP-dependent helicase activity of XPB/ERCC3 may be required for promoter escape. Also involved in transcription-coupled nucleotide excision repair (NER) of damaged DNA. In NER, TFIIH acts by opening DNA around the lesion to allow the excision of the damaged oligonucleotide and its replacement by a new DNA fragment. The structure of the TFIIH transcription complex differs from the NER-TFIIH complex; large movements by XPD/ERCC2 and XPB/ERCC3 are stabilized by XPA. This Macaca fascicularis (Crab-eating macaque) protein is General transcription and DNA repair factor IIH helicase/translocase subunit XPB (ERCC3).